The sequence spans 241 residues: Small ribosomal subunit protein uS3 (241 aa).

The 70-residue stretch at 39 to 108 folds into the KH type-2 domain; that stretch reads IREGVLKLLK…NLKVEVKVIE (70 aa). The interval 215-241 is disordered; it reads SQRVSEKAPMNNDRRFNNKNNNRGGRK. The segment covering 232-241 has biased composition (low complexity); it reads NKNNNRGGRK.

Belongs to the universal ribosomal protein uS3 family. Part of the 30S ribosomal subunit. Forms a tight complex with proteins S10 and S14.

Its function is as follows. Binds the lower part of the 30S subunit head. Binds mRNA in the 70S ribosome, positioning it for translation. This is Small ribosomal subunit protein uS3 from Mesoplasma florum (Acholeplasma florum).